The following is a 606-amino-acid chain: Transcription factor glial cells missing 2 (606 aa).

Residues 20–37 (DHSQLTQFVQPQSQSTHS) are compositionally biased toward polar residues. Disordered stretches follow at residues 20-65 (DHSQ…KGKR), 475-501 (EMQQ…HHYY), and 561-606 (TAPT…SVTH). Residues 44–61 (PGQQQAGGSMTMPSSSTG) are compositionally biased toward low complexity. Residues 65–224 (REWDINDAIV…KNSSVSKRAF (160 aa)) constitute a DNA-binding region (GCM). Residues 490–501 (FGGNQTAGHHYY) are compositionally biased toward polar residues. The segment covering 569–580 (PGHPPPPPPPPT) has biased composition (pro residues). The segment covering 583–593 (YHHHHHHHLHH) has biased composition (basic residues). Over residues 594 to 606 (PAAATGLAPSVTH) the composition is skewed to low complexity.

As to expression, expressed in glial lineages within embryonic procephalic mesoderm. Expression is highest in hemocyte primordia and longitudinal and nerve root ganglia.

The protein resides in the nucleus. In terms of biological role, transcription factor with a minor role promoting glial cell differentiation and a more significant role in hematocyte differentiation. Gcm2, together with gcm, is required for the proliferation of plasmatocyte precursors, the expression of Croquemort protein, and the ability of plasmatocytes to convert into macrophages. In Drosophila melanogaster (Fruit fly), this protein is Transcription factor glial cells missing 2 (gcm2).